The primary structure comprises 296 residues: Trimeric intracellular cation channel type A (296 aa).

Topologically, residues Met-1–Val-19 are lumenal. A helical membrane pass occupies residues Pro-20–Leu-37. The Cytoplasmic portion of the chain corresponds to Lys-38–Pro-51. The chain crosses the membrane as a helical span at residues Phe-52 to Leu-73. Gly-74 lines the Ca(2+) pocket. Residues Gly-74–Ser-85 lie on the Lumenal side of the membrane. The chain crosses the membrane as a helical span at residues Ser-86–Asn-103. The Cytoplasmic portion of the chain corresponds to Leu-104–Lys-107. A helical membrane pass occupies residues Cys-108–Arg-126. A 1,2-diacyl-sn-glycero-3-phospho-(1D-myo-inositol-4,5-bisphosphate)-binding residues include Lys-122 and Arg-126. The Lumenal segment spans residues Val-127–Gly-144. Residues Trp-145–Met-162 form a helical membrane-spanning segment. The Cytoplasmic segment spans residues Ser-163–Met-183. The chain crosses the membrane as a helical span at residues Ser-184–Gln-201. The Lumenal portion of the chain corresponds to Thr-202–Glu-209. A helical membrane pass occupies residues Ala-210–Thr-230. Residues His-231–Pro-273 lie on the Cytoplasmic side of the membrane. Residues His-256–Glu-296 are disordered. The segment covering Lys-278–Thr-287 has biased composition (basic and acidic residues).

The protein belongs to the TMEM38 family. Homotrimer; conformation seems to be controled by binding to diacylglycerol (DAG).

The protein resides in the sarcoplasmic reticulum membrane. It is found in the nucleus membrane. It catalyses the reaction K(+)(in) = K(+)(out). With respect to regulation, channel activity is activated by a change of voltage within the sarcoplasmic reticulum lumen and blocked by luminal high Ca(2+) levels. In terms of biological role, intracellular monovalent cation channel required for maintenance of rapid intracellular calcium release. Acts as a potassium counter-ion channel that functions in synchronization with calcium release from intracellular stores. Opened by a change of voltage within the sarcoplasmic reticulum lumen. The protein is Trimeric intracellular cation channel type A (TMEM38A) of Gallus gallus (Chicken).